The primary structure comprises 439 residues: Chaperone SurA (439 aa).

An N-terminal signal peptide occupies residues 1–27 (MRRISSRLSLVLFAALSCATALFPAHA). PpiC domains lie at 180-281 (GEEF…KLLD) and 293-391 (LEQT…QVEA).

The protein localises to the periplasm. The catalysed reaction is [protein]-peptidylproline (omega=180) = [protein]-peptidylproline (omega=0). Chaperone involved in the correct folding and assembly of outer membrane proteins. Recognizes specific patterns of aromatic residues and the orientation of their side chains, which are found more frequently in integral outer membrane proteins. May act in both early periplasmic and late outer membrane-associated steps of protein maturation. The chain is Chaperone SurA from Aromatoleum aromaticum (strain DSM 19018 / LMG 30748 / EbN1) (Azoarcus sp. (strain EbN1)).